The following is a 227-amino-acid chain: Cytochrome c oxidase subunit 2 (227 aa).

Over 1–14 the chain is Mitochondrial intermembrane; it reads MAYPFQLGLQDASS. A helical membrane pass occupies residues 15-45; the sequence is PIMEELMNFHDHTLMIVFLISSLVLYLMALM. Residues 46–59 lie on the Mitochondrial matrix side of the membrane; sequence LSTKLIHTSTMDAQ. A helical membrane pass occupies residues 60–87; that stretch reads EVETIWTILPAIILIMIALPSLRILYMM. At 88–227 the chain is on the mitochondrial intermembrane side; that stretch reads DEINNPILTV…LFENWSMSMT (140 aa). 6 residues coordinate Cu cation: histidine 161, cysteine 196, glutamate 198, cysteine 200, histidine 204, and methionine 207. Glutamate 198 is a Mg(2+) binding site.

This sequence belongs to the cytochrome c oxidase subunit 2 family. Component of the cytochrome c oxidase (complex IV, CIV), a multisubunit enzyme composed of 14 subunits. The complex is composed of a catalytic core of 3 subunits MT-CO1, MT-CO2 and MT-CO3, encoded in the mitochondrial DNA, and 11 supernumerary subunits COX4I, COX5A, COX5B, COX6A, COX6B, COX6C, COX7A, COX7B, COX7C, COX8 and NDUFA4, which are encoded in the nuclear genome. The complex exists as a monomer or a dimer and forms supercomplexes (SCs) in the inner mitochondrial membrane with NADH-ubiquinone oxidoreductase (complex I, CI) and ubiquinol-cytochrome c oxidoreductase (cytochrome b-c1 complex, complex III, CIII), resulting in different assemblies (supercomplex SCI(1)III(2)IV(1) and megacomplex MCI(2)III(2)IV(2)). Found in a complex with TMEM177, COA6, COX18, COX20, SCO1 and SCO2. Interacts with TMEM177 in a COX20-dependent manner. Interacts with COX20. Interacts with COX16. Cu cation is required as a cofactor.

The protein localises to the mitochondrion inner membrane. It carries out the reaction 4 Fe(II)-[cytochrome c] + O2 + 8 H(+)(in) = 4 Fe(III)-[cytochrome c] + 2 H2O + 4 H(+)(out). In terms of biological role, component of the cytochrome c oxidase, the last enzyme in the mitochondrial electron transport chain which drives oxidative phosphorylation. The respiratory chain contains 3 multisubunit complexes succinate dehydrogenase (complex II, CII), ubiquinol-cytochrome c oxidoreductase (cytochrome b-c1 complex, complex III, CIII) and cytochrome c oxidase (complex IV, CIV), that cooperate to transfer electrons derived from NADH and succinate to molecular oxygen, creating an electrochemical gradient over the inner membrane that drives transmembrane transport and the ATP synthase. Cytochrome c oxidase is the component of the respiratory chain that catalyzes the reduction of oxygen to water. Electrons originating from reduced cytochrome c in the intermembrane space (IMS) are transferred via the dinuclear copper A center (CU(A)) of subunit 2 and heme A of subunit 1 to the active site in subunit 1, a binuclear center (BNC) formed by heme A3 and copper B (CU(B)). The BNC reduces molecular oxygen to 2 water molecules using 4 electrons from cytochrome c in the IMS and 4 protons from the mitochondrial matrix. This is Cytochrome c oxidase subunit 2 (MT-CO2) from Gerbillus gerbillus (Lesser Egyptian gerbil).